A 200-amino-acid polypeptide reads, in one-letter code: BmK-YA precursor (200 aa).

The first 23 residues, 1 to 23, serve as a signal peptide directing secretion; that stretch reads MIFHQFYSILILCLIFPNQVVQS. A propeptide spanning residues 24–34 is cleaved from the precursor; it reads DKERQDWIPSD. Residues 30-200 are disordered; the sequence is WIPSDYGGYM…GYMNPAGRSD (171 aa). An Alanine amide modification is found at alanine 42. Residues 45-100 constitute a propeptide that is removed on maturation; the sequence is SDEERQDWIPSDYGGHMNPAGRSDEERQDWIPSDYGGHMNPAGRSNEERQDWIPSD. Alanine 108 is subject to Alanine amide. A propeptide spanning residues 111–144 is cleaved from the precursor; it reads SDEERQDWIPSDYGGHMNPAGRSNEERQDWIPSD. Residue alanine 152 is modified to Alanine amide. Positions 155–188 are excised as a propeptide; that stretch reads SDEERQDWIPSDYGGHMNPAGRSDEERQDWIPSD. Residue alanine 196 is modified to Alanine amide. A propeptide spanning residues 199 to 200 is cleaved from the precursor; that stretch reads SD.

Venom gland.

The protein resides in the secreted. In terms of biological role, synthetic BmK-YA activates human opioid receptors in vitro, with highest activity on the delta-type/OPRD1 receptor (EC(50)=2.5 uM) and lower activity on mu-type/OPRM1 and kappa-type/OPRK1 receptors (EC(50)=17 uM and 30 uM, respectively). This is BmK-YA precursor from Olivierus martensii (Manchurian scorpion).